The primary structure comprises 383 residues: Spermidine/putrescine import ATP-binding protein PotA (383 aa).

One can recognise an ABC transporter domain in the interval 12-246; that stretch reads IALRDISKVY…PSTPFVAGFI (235 aa). ATP is bound at residue 48–55; the sequence is GPSGCGKT.

The protein belongs to the ABC transporter superfamily. Spermidine/putrescine importer (TC 3.A.1.11.1) family. As to quaternary structure, the complex is composed of two ATP-binding proteins (PotA), two transmembrane proteins (PotB and PotC) and a solute-binding protein (PotD).

Its subcellular location is the cell membrane. The catalysed reaction is ATP + H2O + polyamine-[polyamine-binding protein]Side 1 = ADP + phosphate + polyamineSide 2 + [polyamine-binding protein]Side 1.. Functionally, part of the ABC transporter complex PotABCD involved in spermidine/putrescine import. Responsible for energy coupling to the transport system. The chain is Spermidine/putrescine import ATP-binding protein PotA from Acidothermus cellulolyticus (strain ATCC 43068 / DSM 8971 / 11B).